Consider the following 248-residue polypeptide: Phosphatidylglycerol--prolipoprotein diacylglyceryl transferase (248 aa).

3 helical membrane-spanning segments follow: residues 6-26 (FTLF…GMIL), 47-67 (NIAI…YVVF), and 84-104 (GGGL…YIYT). Arg-130 provides a ligand contact to a 1,2-diacyl-sn-glycero-3-phospho-(1'-sn-glycerol). The next 2 helical transmembrane spans lie at 186-206 (GQVI…IEGL) and 218-238 (MAQV…VYLS).

This sequence belongs to the Lgt family.

The protein localises to the cell membrane. It catalyses the reaction L-cysteinyl-[prolipoprotein] + a 1,2-diacyl-sn-glycero-3-phospho-(1'-sn-glycerol) = an S-1,2-diacyl-sn-glyceryl-L-cysteinyl-[prolipoprotein] + sn-glycerol 1-phosphate + H(+). It functions in the pathway protein modification; lipoprotein biosynthesis (diacylglyceryl transfer). Its function is as follows. Catalyzes the transfer of the diacylglyceryl group from phosphatidylglycerol to the sulfhydryl group of the N-terminal cysteine of a prolipoprotein, the first step in the formation of mature lipoproteins. This chain is Phosphatidylglycerol--prolipoprotein diacylglyceryl transferase, found in Clostridioides difficile (strain 630) (Peptoclostridium difficile).